The following is a 311-amino-acid chain: Olfactory receptor 8B8 (311 aa).

The Extracellular segment spans residues 1 to 25 (MAAENSSFVTQFILAGLTDQPGVQI). N-linked (GlcNAc...) asparagine glycosylation is present at Asn5. The helical transmembrane segment at 26-46 (PLFFLFLGFYVVTVVGNLGLI) threads the bilayer. Topologically, residues 47 to 54 (TLIRLNSH) are cytoplasmic. The chain crosses the membrane as a helical span at residues 55 to 75 (LHTPMYFFLYNLSFIDFCYSS). Over 76-99 (VITPKMLMSFVLKKNSISYAGCMT) the chain is Extracellular. Cys97 and Cys189 are disulfide-bonded. Residues 100-120 (QLFFFLFFVVSESFILSAMAY) traverse the membrane as a helical segment. Residues 121–139 (DRYVAICNPLLYMVTMSPQ) lie on the Cytoplasmic side of the membrane. The chain crosses the membrane as a helical span at residues 140 to 160 (VCFLLLLGVYGMGFAGAMAHT). The Extracellular segment spans residues 161 to 197 (ACMMGVTFCANNLVNHYMCDILPLLECACTSTYVNEL). Residues 198-217 (VVFVVVGIDIGVPTVTIFIS) form a helical membrane-spanning segment. Residues 218-237 (YALILSSIFHIDSTEGRSKA) lie on the Cytoplasmic side of the membrane. A helical membrane pass occupies residues 238 to 258 (FSTCSSHIIAVSLFFGSGAFM). Residues 259-271 (YLKPFSLLAMNQG) are Extracellular-facing. Residues 272 to 292 (KVSSLFYTTVVPMLNPLIYSL) traverse the membrane as a helical segment. Residues 293-311 (RNKDVKVALKKILNKNAFS) lie on the Cytoplasmic side of the membrane.

Belongs to the G-protein coupled receptor 1 family. Expressed in the tongue and testis.

It localises to the cell membrane. In terms of biological role, odorant receptor (Potential). May be involved in taste perception. The sequence is that of Olfactory receptor 8B8 from Homo sapiens (Human).